The sequence spans 354 residues: MNGTEGPNFYVPMSNKTGVVRSPFDYPQYYLAEPWQYSALAAYMFLLILLGLPINFMTLFVTIQHKKLRTPLNYILLNLVFANHFMVLCGFTVTMYTSMHGYFIFGPTGCYIEGFFATLGGEVALWSLVVLAVERYIVVCKPMANFRFGENHAIMGVAFTWIMALSCAAPPLFGWSRYIPEGMQCSCGVDYYTLKPEVNNESFVIYMFIVHFTIPLIVIFFCYGRLLCTVKEAAAQQQESLTTQKAEKEVTRMVVIMVVFFLICWVPYAYVAFYIFTHQGSNFGPVFMTVPAFFAKSSAIYNPVIYIVLNKQFRNCLITTLCCGKNPFGDEDGSSAATSKTEASSVSSSQVSPA.

Residues 1 to 36 (MNGTEGPNFYVPMSNKTGVVRSPFDYPQYYLAEPWQ) lie on the Extracellular side of the membrane. 2 N-linked (GlcNAc...) asparagine glycosylation sites follow: Asn2 and Asn15. A helical membrane pass occupies residues 37–61 (YSALAAYMFLLILLGLPINFMTLFV). At 62–73 (TIQHKKLRTPLN) the chain is on the cytoplasmic side. The chain crosses the membrane as a helical span at residues 74–96 (YILLNLVFANHFMVLCGFTVTMY). At 97–110 (TSMHGYFIFGPTGC) the chain is on the extracellular side. Cys110 and Cys187 are disulfide-bonded. Residues 111-133 (YIEGFFATLGGEVALWSLVVLAV) form a helical membrane-spanning segment. The 'Ionic lock' involved in activated form stabilization signature appears at 134-136 (ERY). Over 134–152 (ERYIVVCKPMANFRFGENH) the chain is Cytoplasmic. Residues 153–173 (AIMGVAFTWIMALSCAAPPLF) traverse the membrane as a helical segment. At 174 to 202 (GWSRYIPEGMQCSCGVDYYTLKPEVNNES) the chain is on the extracellular side. The chain crosses the membrane as a helical span at residues 203–224 (FVIYMFIVHFTIPLIVIFFCYG). Residues 225–252 (RLLCTVKEAAAQQQESLTTQKAEKEVTR) lie on the Cytoplasmic side of the membrane. Residues 253 to 274 (MVVIMVVFFLICWVPYAYVAFY) form a helical membrane-spanning segment. Over 275-286 (IFTHQGSNFGPV) the chain is Extracellular. The helical transmembrane segment at 287-308 (FMTVPAFFAKSSAIYNPVIYIV) threads the bilayer. Position 296 is an N6-(retinylidene)lysine (Lys296). Topologically, residues 309–354 (LNKQFRNCLITTLCCGKNPFGDEDGSSAATSKTEASSVSSSQVSPA) are cytoplasmic. 2 S-palmitoyl cysteine lipidation sites follow: Cys322 and Cys323. A disordered region spans residues 331–354 (EDGSSAATSKTEASSVSSSQVSPA). Positions 334–354 (SSAATSKTEASSVSSSQVSPA) are enriched in low complexity.

Belongs to the G-protein coupled receptor 1 family. Opsin subfamily. Post-translationally, contains one covalently linked retinal chromophore. Upon light absorption, the covalently bound 11-cis-retinal is converted to all-trans-retinal. After hydrolysis of the Schiff base and release of the covalently bound all-trans-retinal, active rhodopsin is regenerated by binding of a fresh molecule of 11-cis-retinal.

Its subcellular location is the membrane. The protein localises to the cell projection. It localises to the cilium. The protein resides in the photoreceptor outer segment. In terms of biological role, photoreceptor required for image-forming vision at low light intensity. Required for photoreceptor cell viability after birth. Light-induced isomerization of 11-cis to all-trans retinal triggers a conformational change that activates signaling via G-proteins. Subsequent receptor phosphorylation mediates displacement of the bound G-protein alpha subunit by arrestin and terminates signaling. This Xenopus laevis (African clawed frog) protein is Rhodopsin (rho).